A 427-amino-acid polypeptide reads, in one-letter code: Glutamate-1-semialdehyde 2,1-aminomutase (427 aa).

Residue Lys-266 is modified to N6-(pyridoxal phosphate)lysine.

The protein belongs to the class-III pyridoxal-phosphate-dependent aminotransferase family. HemL subfamily. Homodimer. The cofactor is pyridoxal 5'-phosphate.

The protein resides in the cytoplasm. The enzyme catalyses (S)-4-amino-5-oxopentanoate = 5-aminolevulinate. It participates in porphyrin-containing compound metabolism; protoporphyrin-IX biosynthesis; 5-aminolevulinate from L-glutamyl-tRNA(Glu): step 2/2. The sequence is that of Glutamate-1-semialdehyde 2,1-aminomutase from Aromatoleum aromaticum (strain DSM 19018 / LMG 30748 / EbN1) (Azoarcus sp. (strain EbN1)).